The sequence spans 396 residues: Probable sugar efflux transporter (396 aa).

The next 12 membrane-spanning stretches (helical) occupy residues 15 to 35 (VVTL…PVGL), 50 to 70 (VGIM…PFML), 81 to 101 (LICL…SWSF), 103 to 123 (VLVI…SITA), 136 to 156 (AQAL…GLPL), 170 to 190 (FFAI…LLPL), 209 to 229 (PALM…YTAY), 246 to 266 (FATA…VIFG), 275 to 295 (ALVS…LPAA), 299 to 319 (IHLG…GLGM), 333 to 353 (VAMA…ALVG), and 364 to 384 (MIGY…IIIF).

Belongs to the major facilitator superfamily. SotB (TC 2.A.1.2) family.

The protein resides in the cell inner membrane. Functionally, involved in the efflux of sugars. The physiological role may be the reduction of the intracellular concentration of toxic sugars or sugar metabolites. This chain is Probable sugar efflux transporter, found in Escherichia coli O127:H6 (strain E2348/69 / EPEC).